Here is a 321-residue protein sequence, read N- to C-terminus: uncharacterized protein (321 aa).

Positions 130 to 314 constitute an Exonuclease domain; it reads NLVYDLETTG…NDVDALIKIM (185 aa).

This is an uncharacterized protein from Acanthamoeba polyphaga (Amoeba).